The sequence spans 456 residues: Solute carrier family 38 member 6 (456 aa).

M1 bears the N-acetylmethionine mark. Phosphoserine is present on residues S4 and S7. 5 helical membrane-spanning segments follow: residues 42–62 (SPGVSFGLSVFNLMNAIMGSG), 85–105 (VALLASYSVHLLLSMCIQTAV), 111–131 (LGLFAFGLPGKLVVAGTIIIQ), 170–190 (LLIIICVGIVFPLALLPKIGF), and 191–211 (LGYTSSLSFFFMMFFALVVII). A disulfide bridge connects residues C218 and C238. N233 is a glycosylation site (N-linked (GlcNAc...) asparagine). A helical transmembrane segment spans residues 250-270 (AYALPTMAFSFLCHTSILPIY). N283 is a glycosylation site (N-linked (GlcNAc...) asparagine). The next 5 helical transmembrane spans lie at 288–308 (AIALSFLIYFISALFGYLTFY), 327–347 (VVVMTVKLCILFAVLLTVPLI), 371–391 (FLITLALNIIIVLLAIYVPDI), 394–414 (VFGVVGASTSTCLIFIFPGLF), and 431–451 (AFVLLIFGILVGNFSLALIIF).

Belongs to the amino acid/polyamine transporter 2 family.

The protein resides in the cell membrane. It localises to the synapse. It carries out the reaction L-glutamine(out) = L-glutamine(in). The enzyme catalyses L-glutamate(out) = L-glutamate(in). Functionally, amino acid transporter with an apparent selectivity for L-glutamine and L-glutamate. May facilitate glutamine uptake in excitatory neurons. The transport mechanism remains to be elucidated. The polypeptide is Solute carrier family 38 member 6 (Homo sapiens (Human)).